A 309-amino-acid chain; its full sequence is Sulfur oxygenase/reductase (309 aa).

Residue cysteine 31 is modified to Cysteine persulfide. Fe cation contacts are provided by histidine 86, histidine 90, and glutamate 114.

As to quaternary structure, homoicosatetramer. The resulting structure is a hollow sphere where catalysis takes place in the inside cavity. The cofactor is Fe cation.

Its subcellular location is the cytoplasm. The catalysed reaction is 4 sulfur + O2 + 4 H2O = 2 hydrogen sulfide + 2 sulfite + 6 H(+). Inhibited by zinc. Catalyzes the simultaneous oxidation and reduction of elemental sulfur in the presence of oxygen, with sulfite and hydrogen sulfide as products. The polypeptide is Sulfur oxygenase/reductase (sor) (Acidianus ambivalens (Desulfurolobus ambivalens)).